The following is a 243-amino-acid chain: Carboxy-S-adenosyl-L-methionine synthase (243 aa).

Residues Tyr35, 68 to 70 (GCS), 92 to 93 (DN), and Arg199 each bind S-adenosyl-L-methionine.

Belongs to the class I-like SAM-binding methyltransferase superfamily. Cx-SAM synthase family. As to quaternary structure, homodimer.

It carries out the reaction prephenate + S-adenosyl-L-methionine = carboxy-S-adenosyl-L-methionine + 3-phenylpyruvate + H2O. Its function is as follows. Catalyzes the conversion of S-adenosyl-L-methionine (SAM) to carboxy-S-adenosyl-L-methionine (Cx-SAM). This chain is Carboxy-S-adenosyl-L-methionine synthase, found in Helicobacter pylori (strain P12).